The sequence spans 267 residues: 3-methyl-2-oxobutanoate hydroxymethyltransferase (267 aa).

Residues Asp-42 and Asp-86 each coordinate Mg(2+). Residues 42–43 (DS), Asp-86, and Lys-116 contribute to the 3-methyl-2-oxobutanoate site. Position 118 (Glu-118) interacts with Mg(2+). Residue Glu-185 is the Proton acceptor of the active site.

It belongs to the PanB family. Homodecamer; pentamer of dimers. The cofactor is Mg(2+).

Its subcellular location is the cytoplasm. The enzyme catalyses 3-methyl-2-oxobutanoate + (6R)-5,10-methylene-5,6,7,8-tetrahydrofolate + H2O = 2-dehydropantoate + (6S)-5,6,7,8-tetrahydrofolate. Its pathway is cofactor biosynthesis; (R)-pantothenate biosynthesis; (R)-pantoate from 3-methyl-2-oxobutanoate: step 1/2. Functionally, catalyzes the reversible reaction in which hydroxymethyl group from 5,10-methylenetetrahydrofolate is transferred onto alpha-ketoisovalerate to form ketopantoate. The sequence is that of 3-methyl-2-oxobutanoate hydroxymethyltransferase from Parasynechococcus marenigrum (strain WH8102).